The sequence spans 429 residues: Probable proton-coupled zinc antiporter SLC30A4 (429 aa).

The Cytoplasmic portion of the chain corresponds to 1-113 (MAGSGAWKRL…ILKQRKVKAR (113 aa)). The helical transmembrane segment at 114 to 134 (LTIAAVLYLLFMIGELVGGYI) threads the bilayer. Topologically, residues 135-143 (ANSLAIMTD) are lumenal. A helical transmembrane segment spans residues 144–164 (ALHMLTDLSAIILTLLALWLS). Zn(2+) is bound by residues His146 and Asp150. The Cytoplasmic segment spans residues 165-178 (SKSPTKRFTFGFHR). The helical transmembrane segment at 179-199 (LEVLSAMISVLLVYILMGFLL) threads the bilayer. The Lumenal portion of the chain corresponds to 200-216 (YEAVQRTIHMNYEINGD). A helical membrane pass occupies residues 217 to 237 (IMLITAAVGVAVNVIMGFLLN). The Cytoplasmic portion of the chain corresponds to 238–274 (QSGHRHSHSHSLPSNSPTRGSGCERNHGQDSLAVRAA). The tract at residues 240 to 264 (GHRHSHSHSLPSNSPTRGSGCERNH) is zinc binding. Residues 275-295 (FVHALGDLVQSVGVLIAAYII) form a helical membrane-spanning segment. The Zn(2+) site is built by His277 and Asp281. Topologically, residues 296–310 (RFKPEYKIADPICTY) are lumenal. The helical transmembrane segment at 311–331 (VFSLLVAFTTFRIIWDTVVII) threads the bilayer. Over 332 to 429 (LEGVPSHLNV…TCANCQSSSP (98 aa)) the chain is Cytoplasmic.

This sequence belongs to the cation diffusion facilitator (CDF) transporter (TC 2.A.4) family. SLC30A subfamily. Homodimer; dityrosine-linked. Homodimerization could be specific of the human protein and enhances the zinc transport efficiency. Interacts with TMEM163. Post-translationally, homodimerization through dityrosine bonds is stimulated by oxidative stress.

The protein localises to the endosome membrane. Its subcellular location is the late endosome membrane. It is found in the lysosome membrane. The catalysed reaction is Zn(2+)(in) + 2 H(+)(out) = Zn(2+)(out) + 2 H(+)(in). In terms of biological role, probable proton-coupled zinc ion antiporter mediating zinc import from cytoplasm potentially into the endocytic compartment. Controls zinc deposition in milk. This Homo sapiens (Human) protein is Probable proton-coupled zinc antiporter SLC30A4.